A 200-amino-acid polypeptide reads, in one-letter code: Small ribosomal subunit protein uS4 (200 aa).

The disordered stretch occupies residues Thr-22 to Lys-42. An S4 RNA-binding domain is found at Ser-92–Lys-152.

The protein belongs to the universal ribosomal protein uS4 family. As to quaternary structure, part of the 30S ribosomal subunit. Contacts protein S5. The interaction surface between S4 and S5 is involved in control of translational fidelity.

Its function is as follows. One of the primary rRNA binding proteins, it binds directly to 16S rRNA where it nucleates assembly of the body of the 30S subunit. In terms of biological role, with S5 and S12 plays an important role in translational accuracy. The chain is Small ribosomal subunit protein uS4 from Bacillus licheniformis (strain ATCC 14580 / DSM 13 / JCM 2505 / CCUG 7422 / NBRC 12200 / NCIMB 9375 / NCTC 10341 / NRRL NRS-1264 / Gibson 46).